A 137-amino-acid polypeptide reads, in one-letter code: uncharacterized protein (137 aa).

Helical transmembrane passes span 26-42 (CSLC…FFAM) and 52-69 (ASIP…GSIL).

The protein localises to the membrane. This is an uncharacterized protein from Saccharomyces cerevisiae (strain ATCC 204508 / S288c) (Baker's yeast).